The following is a 398-amino-acid chain: Putative tyrosine-protein phosphatase C15H7.3 (398 aa).

Basic residues predominate over residues 1–15; the sequence is MERSQKSARKKKKTS. The tract at residues 1-114 is disordered; sequence MERSQKSARK…EPWSEEEPAK (114 aa). The span at 18–40 shows a compositional bias: basic and acidic residues; that stretch reads GNDRSIRSERKSKQKKPAGEKSQ. Residues 41–50 are compositionally biased toward basic residues; sequence KSRRTRKSRG. Residues 55 to 73 show a composition bias toward polar residues; that stretch reads GFTSRETIQPSSSGQSEGT. Over residues 74–114 the composition is skewed to basic and acidic residues; that stretch reads TRMDDQKDEKKDDKKEEKKEERKEEKKEEVKEPWSEEEPAK. The Tyrosine-protein phosphatase domain occupies 125-376; the sequence is TNVGGTFKQT…GTVHRSMACW (252 aa).

It belongs to the protein-tyrosine phosphatase family. Non-receptor class subfamily.

The enzyme catalyses O-phospho-L-tyrosyl-[protein] + H2O = L-tyrosyl-[protein] + phosphate. The polypeptide is Putative tyrosine-protein phosphatase C15H7.3 (Caenorhabditis elegans).